A 513-amino-acid polypeptide reads, in one-letter code: Na(+)/H(+) antiporter NhaB (513 aa).

12 helical membrane passes run 21–41, 64–84, 88–108, 119–139, 143–163, 202–222, 243–263, 299–318, 322–344, 350–370, 389–409, and 477–497; these read ICII…SPFV, QPGG…AHHV, IMAN…IYFM, LLIV…SATF, FLDA…FYGV, LLMH…VGEP, LPVS…LEHF, MGIQ…LHLA, IIGL…HAIG, PMPF…IVDL, LALF…VFVG, and MALP…EFLL.

Belongs to the NhaB Na(+)/H(+) (TC 2.A.34) antiporter family.

The protein resides in the cell inner membrane. The catalysed reaction is 2 Na(+)(in) + 3 H(+)(out) = 2 Na(+)(out) + 3 H(+)(in). Functionally, na(+)/H(+) antiporter that extrudes sodium in exchange for external protons. The protein is Na(+)/H(+) antiporter NhaB of Actinobacillus pleuropneumoniae serotype 3 (strain JL03).